Consider the following 276-residue polypeptide: Ribosomal RNA small subunit methyltransferase A (276 aa).

Positions 27, 29, 54, 75, 101, and 122 each coordinate S-adenosyl-L-methionine.

Belongs to the class I-like SAM-binding methyltransferase superfamily. rRNA adenine N(6)-methyltransferase family. RsmA subfamily.

The protein resides in the cytoplasm. It catalyses the reaction adenosine(1518)/adenosine(1519) in 16S rRNA + 4 S-adenosyl-L-methionine = N(6)-dimethyladenosine(1518)/N(6)-dimethyladenosine(1519) in 16S rRNA + 4 S-adenosyl-L-homocysteine + 4 H(+). Specifically dimethylates two adjacent adenosines (A1518 and A1519) in the loop of a conserved hairpin near the 3'-end of 16S rRNA in the 30S particle. May play a critical role in biogenesis of 30S subunits. This Brucella abortus (strain S19) protein is Ribosomal RNA small subunit methyltransferase A.